Reading from the N-terminus, the 448-residue chain is Inositol polyphosphate 5-phosphatase K (448 aa).

The tract at residues 16-318 (IHVVTWNVAS…SDHKPVSGTF (303 aa)) is catalytic. Residues 318–448 (FDLELKPLVS…DPLGEAQPQI (131 aa)) are required for interaction with GPR78 and PAK1. A required for ruffle localization region spans residues 321–448 (ELKPLVSAPL…DPLGEAQPQI (128 aa)).

The protein belongs to the inositol 1,4,5-trisphosphate 5-phosphatase type II family. As to quaternary structure, interacts with GPR78; necessary for INPP5K localization at the endoplasmic reticulum. Interacts with PAK1; competes with GPR78. Ubiquitously expressed with highest levels in skeletal muscle, heart and kidney.

Its subcellular location is the endoplasmic reticulum. The protein resides in the cytoplasm. The enzyme catalyses 1D-myo-inositol 1,4,5-trisphosphate + H2O = 1D-myo-inositol 1,4-bisphosphate + phosphate. It catalyses the reaction 1D-myo-inositol 1,3,4,5-tetrakisphosphate + H2O = 1D-myo-inositol 1,3,4-trisphosphate + phosphate. The catalysed reaction is a 1,2-diacyl-sn-glycero-3-phospho-(1D-myo-inositol-4,5-bisphosphate) + H2O = a 1,2-diacyl-sn-glycero-3-phospho-(1D-myo-inositol 4-phosphate) + phosphate. It carries out the reaction a 1,2-diacyl-sn-glycero-3-phospho-(1D-myo-inositol-3,4,5-trisphosphate) + H2O = a 1,2-diacyl-sn-glycero-3-phospho-(1D-myo-inositol-3,4-bisphosphate) + phosphate. The enzyme catalyses 1,2-dioctanoyl-sn-glycero-3-phospho-(1D-myo-inositol-3,4,5-trisphosphate) + H2O = 1,2-dioctanoyl-sn-glycero-3-phospho-(1D-myo-inositol-3,4-bisphosphate) + phosphate. Inositol 5-phosphatase which acts on inositol 1,4,5-trisphosphate, inositol 1,3,4,5-tetrakisphosphate, phosphatidylinositol 4,5-bisphosphate and phosphatidylinositol 3,4,5-trisphosphate. Has 6-fold higher affinity for phosphatidylinositol 4,5-bisphosphate than for inositol 1,4,5-trisphosphate. Negatively regulates assembly of the actin cytoskeleton. Controls insulin-dependent glucose uptake among inositol 3,4,5-trisphosphate phosphatases; therefore, is the specific regulator for insulin signaling in skeletal muscle. The sequence is that of Inositol polyphosphate 5-phosphatase K from Homo sapiens (Human).